Reading from the N-terminus, the 758-residue chain is Ribosomal RNA processing protein 1 homolog B (758 aa).

Ser245 is modified (phosphoserine). The span at 259 to 272 shows a compositional bias: basic residues; sequence AVSKKKTALGKNHS. The interval 259-285 is disordered; it reads AVSKKKTALGKNHSRKDGLSDERGRDD. Residues 273–285 are compositionally biased toward basic and acidic residues; sequence RKDGLSDERGRDD. Phosphoserine occurs at positions 350, 392, 394, and 395. Residues 381-598 are disordered; the sequence is GSRVFCVEEE…KTASLKKRKK (218 aa). Residues 397–408 are compositionally biased toward basic residues; it reads QKRRRKKKKKHH. Residues 447 to 457 show a composition bias toward low complexity; the sequence is GAEATSSTGEE. Residues Ser452 and Ser458 each carry the phosphoserine modification. Basic residues predominate over residues 469–481; it reads HNKRKRPRKKSPR. Low complexity predominate over residues 498 to 513; that stretch reads SQSGPSGSHPQGPRGS. Phosphoserine is present on Ser513. Positions 566-575 are enriched in basic residues; the sequence is QRRRLQKKKA. The residue at position 579 (Ser579) is a Phosphoserine. Lys652 is subject to N6-acetyllysine. The segment at 660-681 is disordered; that stretch reads KSSTATHPPGPAVQLNKTPSSS. 2 positions are modified to phosphoserine: Ser702 and Ser706. Positions 707 to 758 are disordered; that stretch reads PTGPSRVAFDPEQKPLHGVLKTPTSSPASSPLVAKKPLTTTPRRRPRAMDFF. Arg712 carries the citrulline modification. At Thr728 the chain carries Phosphothreonine. 3 positions are modified to phosphoserine: Ser732, Ser735, and Ser736.

This sequence belongs to the RRP1 family. As to quaternary structure, interacts with the transcriptional activator E2F1. Interacts with serine/threonine-protein phosphatase PP1 subunits PPP1CB and PPP1CC but not with PPP1CA. Interacts with 60S ribosomal proteins RPL5 and RPL27, ribosomal processing protein RRP1/NNP1 and other nucleolar proteins including NOP2/NOL1 and FBL. Also interacts with nucleolar protein NPM1/B23. Interacts with splicing factor SRSF1 and with LUC7L3/CROP. Interacts with GTPase activator SIPA1. Interacts with CBX5/HP1alpha, H1-10, NCL, PARP1, TRIM28 and YBX3. In terms of assembly, (Microbial infection) Interacts with influenza A virus nucleoprotein NP and with RNA-directed RNA polymerase subunits PB1 and PB2. In terms of processing, citrullinated by PADI4.

It localises to the nucleus. The protein localises to the nucleolus. It is found in the nucleoplasm. Its subcellular location is the chromosome. Positively regulates DNA damage-induced apoptosis by acting as a transcriptional coactivator of proapoptotic target genes of the transcriptional activator E2F1. Likely to play a role in ribosome biogenesis by targeting serine/threonine protein phosphatase PP1 to the nucleolus. Involved in regulation of mRNA splicing. Inhibits SIPA1 GTPase activity. Involved in regulating expression of extracellular matrix genes. Associates with chromatin and may play a role in modulating chromatin structure. Functionally, (Microbial infection) Following influenza A virus (IAV) infection, promotes viral mRNA transcription by facilitating the binding of IAV RNA-directed RNA polymerase to capped mRNA. The sequence is that of Ribosomal RNA processing protein 1 homolog B (RRP1B) from Homo sapiens (Human).